Here is a 232-residue protein sequence, read N- to C-terminus: Orotidine 5'-phosphate decarboxylase (232 aa).

Substrate-binding positions include aspartate 11, lysine 33, 60–69 (DLKFHDIPHT), threonine 119, arginine 180, glutamine 189, glycine 209, and arginine 210. Residue lysine 62 is the Proton donor of the active site.

Belongs to the OMP decarboxylase family. Type 1 subfamily. Homodimer.

It carries out the reaction orotidine 5'-phosphate + H(+) = UMP + CO2. It functions in the pathway pyrimidine metabolism; UMP biosynthesis via de novo pathway; UMP from orotate: step 2/2. In terms of biological role, catalyzes the decarboxylation of orotidine 5'-monophosphate (OMP) to uridine 5'-monophosphate (UMP). This chain is Orotidine 5'-phosphate decarboxylase, found in Nitrosococcus oceani (strain ATCC 19707 / BCRC 17464 / JCM 30415 / NCIMB 11848 / C-107).